The chain runs to 234 residues: ATP synthase subunit a 2 (234 aa).

A run of 6 helical transmembrane segments spans residues 29–49 (FFQHVTHTWLVMAILIGVGLL), 90–110 (LIATLALFLLVSNLIGLIPGF), 116–136 (SLNTNAALAVGVFLVTHIVGV), 147–167 (FMGPVWWLTPLILPIELIGHL), 186–206 (IVLMIFFSLVPLLLPIPMMLM), and 207–227 (GILVAFIQTFVFMLLSMIYIA).

Belongs to the ATPase A chain family. As to quaternary structure, F-type ATPases have 2 components, CF(1) - the catalytic core - and CF(0) - the membrane proton channel. CF(1) has five subunits: alpha(3), beta(3), gamma(1), delta(1), epsilon(1). CF(0) has three main subunits: a(1), b(2) and c(9-12). The alpha and beta chains form an alternating ring which encloses part of the gamma chain. CF(1) is attached to CF(0) by a central stalk formed by the gamma and epsilon chains, while a peripheral stalk is formed by the delta and b chains.

The protein resides in the cell inner membrane. Key component of the proton channel; it plays a direct role in the translocation of protons across the membrane. In Syntrophotalea carbinolica (strain DSM 2380 / NBRC 103641 / GraBd1) (Pelobacter carbinolicus), this protein is ATP synthase subunit a 2.